The primary structure comprises 334 residues: Ketol-acid reductoisomerase (NADP(+)) (334 aa).

Positions 2-181 (TKVYYDETVT…GATRAGVIET (180 aa)) constitute a KARI N-terminal Rossmann domain. Residues 25 to 28 (YGSQ), R48, S52, and 82 to 85 (DEIQ) contribute to the NADP(+) site. H107 is an active-site residue. Residue G133 participates in NADP(+) binding. In terms of domain architecture, KARI C-terminal knotted spans 182–327 (TFKEETETDL…RELREMMPFI (146 aa)). Residues D190, E194, E226, and E230 each coordinate Mg(2+). S251 contacts substrate.

The protein belongs to the ketol-acid reductoisomerase family. The cofactor is Mg(2+).

It carries out the reaction (2R)-2,3-dihydroxy-3-methylbutanoate + NADP(+) = (2S)-2-acetolactate + NADPH + H(+). The enzyme catalyses (2R,3R)-2,3-dihydroxy-3-methylpentanoate + NADP(+) = (S)-2-ethyl-2-hydroxy-3-oxobutanoate + NADPH + H(+). It participates in amino-acid biosynthesis; L-isoleucine biosynthesis; L-isoleucine from 2-oxobutanoate: step 2/4. It functions in the pathway amino-acid biosynthesis; L-valine biosynthesis; L-valine from pyruvate: step 2/4. Involved in the biosynthesis of branched-chain amino acids (BCAA). Catalyzes an alkyl-migration followed by a ketol-acid reduction of (S)-2-acetolactate (S2AL) to yield (R)-2,3-dihydroxy-isovalerate. In the isomerase reaction, S2AL is rearranged via a Mg-dependent methyl migration to produce 3-hydroxy-3-methyl-2-ketobutyrate (HMKB). In the reductase reaction, this 2-ketoacid undergoes a metal-dependent reduction by NADPH to yield (R)-2,3-dihydroxy-isovalerate. The sequence is that of Ketol-acid reductoisomerase (NADP(+)) from Staphylococcus epidermidis (strain ATCC 35984 / DSM 28319 / BCRC 17069 / CCUG 31568 / BM 3577 / RP62A).